The following is a 406-amino-acid chain: Ubiquitin-associated domain-containing protein 1 (406 aa).

Positions 14–98 (LRLHICSLDG…LLLVKKRAPP (85 aa)) constitute a Ubiquitin-like domain. Positions 95-122 (RAPPPTPKMAEVSADEKRKQDQKAPDKD) are disordered. Residues 108–122 (ADEKRKQDQKAPDKD) show a composition bias toward basic and acidic residues. The 46-residue stretch at 186-231 (EDDEDRVDEVALRQLTEMGFPESRAVKALRLNHMSVTQAMEWLIEH) folds into the UBA 1 domain. Positions 238–257 (DAPLPCENSSEAAGGLATGE) are enriched in low complexity. The disordered stretch occupies residues 238–272 (DAPLPCENSSEAAGGLATGEAETKPTLGAGAEDPK). Positions 289 to 329 (RPDPRAVIALMEMGFDEKEVIDALRVNNNQQDAACEWLLGD) constitute a UBA 2 domain. The region spanning 354 to 393 (NPVVQLGLTNPKTLLAFEDMLENPLNSTQWMNDPETGPVM) is the STI1 domain.

As to quaternary structure, component of the KPC complex.

It localises to the cytoplasm. Its pathway is protein modification; protein ubiquitination. In terms of biological role, non-catalytic component of the KPC complex, a E3 ubiquitin-protein ligase complex that mediates polyubiquitination of target proteins, such as CDKN1B and NFKB1. Within the KPC complex, UBAC1 acts as an adapter that promotes the transfer of target proteins that have been polyubiquitinated by RNF123/KPC1 to the 26S proteasome. The protein is Ubiquitin-associated domain-containing protein 1 (ubac1) of Xenopus tropicalis (Western clawed frog).